We begin with the raw amino-acid sequence, 627 residues long: Glucokinase regulatory protein (627 aa).

SIS domains follow at residues 90 to 286 (VQEV…QGVV) and 320 to 499 (VGIS…LLGK). Residues 109 to 110 (TS), Glu-153, and 179 to 181 (SVG) each bind beta-D-fructose 1-phosphate. 109–110 (TS) provides a ligand contact to beta-D-fructose 6-phosphate. Residue 179–181 (SVG) participates in beta-D-fructose 6-phosphate binding. The important for interaction with GCK stretch occupies residues 199 to 200 (AV). Glu-348 contacts beta-D-fructose 1-phosphate. Positions 463 to 465 (LLF) are essential for interaction with GCK. Residue Lys-514 participates in beta-D-fructose 1-phosphate binding. Lys-514 lines the beta-D-fructose 6-phosphate pocket.

This sequence belongs to the GCKR family. As to quaternary structure, interacts (fructose 6-phosphate bound form) with GCK. Detected in liver (at protein level). Not detected in muscle, brain, heart, testis, intestine or spleen.

The protein resides in the cytoplasm. It localises to the nucleus. Its subcellular location is the mitochondrion. In terms of biological role, regulates glucokinase (GCK) by forming an inactive complex with this enzyme. Acts by promoting GCK recruitment to the nucleus, possibly to provide a reserve of GCK that can be quickly released in the cytoplasm after a meal. The affinity of GCKR for GCK is modulated by fructose metabolites: GCKR with bound fructose 6-phosphate has increased affinity for GCK, while GCKR with bound fructose 1-phosphate has strongly decreased affinity for GCK and does not inhibit GCK activity. This is Glucokinase regulatory protein from Rattus norvegicus (Rat).